The sequence spans 207 residues: Calcipressin-like protein (207 aa).

The tract at residues 176–181 is required for tax-6 interaction; the sequence is PAIIVH.

This sequence belongs to the RCAN family. As to quaternary structure, interacts with tax-6 (via catalytic domain); the interaction is calcium-dependent. As to expression, expressed in lateral hypodermal cells, marginal cells of the pharynx, vulva epithelial cells, ventral and dorsal nerve cords and commissures and various neurons in the anterior and posterior regions. Expressed in male tail structures including the diagonal muscles, sensory rays and spicules. Expressed in PHC neurons and most tail neurons and support cells of the phasmid neurons. Also expressed in pharyngeal muscle, head neurons, excretory canal cells and hypodermal seam cells.

Functionally, inhibits tax-6/calcineurin A phosphatase activity and thereby negatively regulates calcineurin-mediated functions. Plays a role in modulating temperature-dependent calcium responses in AFD neurons and in addition, also negatively regulates thermotaxis in a tax-6-dependent manner in AFD neurons. In response to changes in intracellular calcium levels may also regulate nuclear translocation of transcriptional regulators such as crtc-1. May play a role in regulating body size. Plays a role in male tail tip morphogenesis. In Caenorhabditis elegans, this protein is Calcipressin-like protein.